We begin with the raw amino-acid sequence, 188 residues long: Adrenodoxin, mitochondrial (188 aa).

The transit peptide at 1 to 64 (MAAAPGARLL…RPLSVSARAR (64 aa)) directs the protein to the mitochondrion. Serine 67 bears the Phosphoserine mark. A 2Fe-2S ferredoxin-type domain is found at 69 to 175 (DKVTVHFKNR…NMTVRVPEAV (107 aa)). Lysine 70 carries the N6-acetyllysine; alternate modification. Lysine 70 bears the N6-succinyllysine; alternate mark. [2Fe-2S] cluster-binding residues include cysteine 110, cysteine 116, cysteine 119, and cysteine 156. Lysine 162 is modified (N6-succinyllysine). Serine 181 is modified (phosphoserine).

It belongs to the adrenodoxin/putidaredoxin family. As to quaternary structure, interacts with CYP11A1. It depends on [2Fe-2S] cluster as a cofactor. As to expression, found in all tissues, most abundant in adrenals, ovaries and testes.

The protein resides in the mitochondrion matrix. Essential for the synthesis of various steroid hormones. Participates in the reduction of mitochondrial cytochrome P450 for steroidogenesis. Transfers electrons from adrenodoxin reductase to CYP11A1, a cytochrome P450 that catalyzes cholesterol side-chain cleavage. Does not form a ternary complex with adrenodoxin reductase and CYP11A1 but shuttles between the two enzymes to transfer electrons. This is Adrenodoxin, mitochondrial (Fdx1) from Rattus norvegicus (Rat).